The following is a 377-amino-acid chain: MAFLTKKKKFKFQTSFNLEELTAVPFVNGVLFCKVRLLDGGDFVSQSSREEVQENCVRWKKKFNFVCKMSANSATGVLDPCVCRVSVRKELKGGKTYSKLGFADLNLAEFAGSGSAARCCLLEGYDTRNTRQDNSILKVNIGMSLLSGDPCFKTPLSTVKTVSPPGQDSSLQMTCKGEGTVRSAGGTVRQNRSRQAMLSSGVFDETEQNLSSPEETPHSGHSRNSSQASQQSKISGHSSEHSRCSSMSDLTHRRNTSTSSSVSGGLSLTAEGTEPERDVKPEKPPRPIRPPLHPDRHSRRKKDSVESQPTWVDDTRIDADDIVEKIMQSQDFSDVSNNEDSHLRLFVSRDGSTTLSGIQLANRISAGVFEPVMIEIR.

The C2 NT-type domain occupies alanine 2–leucine 145. 3 stretches are compositionally biased toward polar residues: residues lysine 160–methionine 173, valine 188–leucine 198, and serine 222–isoleucine 234. The tract at residues lysine 160–aspartate 313 is disordered. Residues threonine 256 to threonine 269 are compositionally biased toward low complexity. Residues glutamate 274–proline 285 show a composition bias toward basic and acidic residues.

It belongs to the EEIG family.

Its subcellular location is the nucleus. It is found in the cytoplasm. Functionally, may be involved in osteoclast differentiation. This is Early estrogen-induced gene 1 protein (eeig1) from Xenopus laevis (African clawed frog).